The chain runs to 584 residues: Pescadillo homolog (584 aa).

The interval 1–54 is required for 28S ribosomal RNA processing; the sequence is MGGLEKKKYERGSATNYITRNKARKKLQLSLPDFRRLCILKGIYPHEPKHKKKV. Residues 1–257 are sufficient for nucleolar localization; that stretch reads MGGLEKKKYE…PKLEGQAQAE (257 aa). Residue Lys-98 is modified to N6-acetyllysine. The tract at residues 312-414 is sufficient for interaction with MAP1B; the sequence is RKKELEAQEK…LLLPVAEYFP (103 aa). The region spanning 321 to 414 is the BRCT domain; that stretch reads KHKKLFEGLK…LLLPVAEYFP (94 aa). A disordered region spans residues 449–510; sequence DPGHLEEEEE…EEKKPQVMAG (62 aa). A compositionally biased stretch (acidic residues) spans 454–489; it reads EEEEEEDEDDDNEGDVAAENEEEDVEVESEEEEEEE. Residues 496–505 are compositionally biased toward basic and acidic residues; it reads EQHRLEEKKP. Lys-513 participates in a covalent cross-link: Glycyl lysine isopeptide (Lys-Gly) (interchain with G-Cter in SUMO1); alternate. A Glycyl lysine isopeptide (Lys-Gly) (interchain with G-Cter in SUMO2); alternate cross-link involves residue Lys-513. The segment at 535 to 584 is required for 28S ribosomal RNA processing; sequence MMKKREKYLYQKIMFGKRRKIREANKLAEKRKAHDDAVRSEKKAKRTRPV. The segment covering 560–575 has biased composition (basic and acidic residues); the sequence is KLAEKRKAHDDAVRSE. The segment at 560–584 is disordered; that stretch reads KLAEKRKAHDDAVRSEKKAKRTRPV.

Belongs to the pescadillo family. In terms of assembly, component of the PeBoW complex, composed of BOP1, PES1 and WDR12. The complex is held together by BOP1, which interacts with PES1 via its N-terminal domain and with WDR12 via a high-affinity interaction between the seven-bladed beta-propeller domains of the 2 proteins. The PeBoW complex associates with the 66S pre-ribosome. The PeBoW complex also associates with DDX27, PES1 interacts directly with DDX27. Interacts with IRS1 and UBTF. May interact with MAP1B. Post-translationally, sumoylated. As to expression, ubiquitous. Highest levels appear to be found in tissues that contain a population of proliferating cells, such as ovary and testis. Also appears to be highly expressed in kidney and liver. In the brain expression is restricted to neural progenitor cells and postmitotic neurons. Highly expressed in malignant astrocytes.

It localises to the nucleus. It is found in the nucleolus. Its subcellular location is the nucleoplasm. The protein resides in the chromosome. Component of the PeBoW complex, which is required for maturation of 28S and 5.8S ribosomal RNAs and formation of the 60S ribosome. The sequence is that of Pescadillo homolog (Pes1) from Mus musculus (Mouse).